Reading from the N-terminus, the 143-residue chain is Large ribosomal subunit protein uL15 (143 aa).

Positions 1-45 are disordered; the sequence is MLLNTVQPGVGAKHAKRRVGRGIGSGLGKTCGRGHKGQKSRAGGF. Positions 21-31 are enriched in gly residues; it reads RGIGSGLGKTC.

The protein belongs to the universal ribosomal protein uL15 family. Part of the 50S ribosomal subunit.

In terms of biological role, binds to the 23S rRNA. The protein is Large ribosomal subunit protein uL15 of Chromobacterium violaceum (strain ATCC 12472 / DSM 30191 / JCM 1249 / CCUG 213 / NBRC 12614 / NCIMB 9131 / NCTC 9757 / MK).